We begin with the raw amino-acid sequence, 150 residues long: MQVLVDADACPAVIKDMLFRAARRAEICVTLVANQFLRTPPSPFIKAVQVPAGFDVADARIVELAEPGDLVITADIPLAAAVLDKGAHALDPRGNWFSRENIEERLSTRAMMDQLRSAGIDTGGPAPFSARDGKTFASQLDRFLARHAPR.

The protein belongs to the UPF0178 family.

In Burkholderia cenocepacia (strain HI2424), this protein is UPF0178 protein Bcen2424_1660.